A 465-amino-acid polypeptide reads, in one-letter code: Soluble pyridine nucleotide transhydrogenase (465 aa).

36-45 (ERYDNVGGGC) is an FAD binding site.

The protein belongs to the class-I pyridine nucleotide-disulfide oxidoreductase family. FAD is required as a cofactor.

The protein resides in the cytoplasm. The enzyme catalyses NAD(+) + NADPH = NADH + NADP(+). Its function is as follows. Conversion of NADPH, generated by peripheral catabolic pathways, to NADH, which can enter the respiratory chain for energy generation. This is Soluble pyridine nucleotide transhydrogenase from Sodalis glossinidius (strain morsitans).